Reading from the N-terminus, the 627-residue chain is Probable inactive receptor kinase At3g02880 (627 aa).

The first 23 residues, 1-23, serve as a signal peptide directing secretion; it reads MKYKRKLSLSVVFLFVFYLAAVT. LRR repeat units lie at residues 91–112, 115–137, 139–161, 163–184, and 185–206; these read QLKT…DFSN, LLRY…LFTL, SIIR…VNSA, RLVT…ITLP, and LQQF…LSSW. Residues 222-246 are disordered; that stretch reads DTCEAESPNGGDAGGPNTPPEKKDS. A helical membrane pass occupies residues 253 to 273; it reads AIVGIVIGCVVGLLLLLLILF. The Protein kinase domain occupies 345–620; sequence KASAEVLGKG…LIEEVSHSSG (276 aa). Position 347 is a phosphoserine (Ser-347). Residues 351-359 and Lys-373 contribute to the ATP site; that span reads LGKGTVGSS. Residues 389–409 traverse the membrane as a helical segment; the sequence is LHVLGSMSHANLVTLIAYYFS. At Ser-424 the chain carries Phosphoserine. At Thr-444 the chain carries Phosphothreonine. Ser-519 bears the Phosphoserine mark. Thr-595 carries the phosphothreonine modification. Phosphoserine occurs at positions 621 and 626.

Belongs to the protein kinase superfamily. Ser/Thr protein kinase family.

The protein resides in the membrane. The protein is Probable inactive receptor kinase At3g02880 of Arabidopsis thaliana (Mouse-ear cress).